Consider the following 87-residue polypeptide: Small ribosomal subunit protein bS20 (87 aa).

This sequence belongs to the bacterial ribosomal protein bS20 family.

Its function is as follows. Binds directly to 16S ribosomal RNA. The sequence is that of Small ribosomal subunit protein bS20 from Mycoplasma pneumoniae (strain ATCC 29342 / M129 / Subtype 1) (Mycoplasmoides pneumoniae).